We begin with the raw amino-acid sequence, 344 residues long: Photosystem II protein D1 (344 aa).

Thr-2 is modified (N-acetylthreonine). At Thr-2 the chain carries Phosphothreonine. Transmembrane regions (helical) follow at residues 29-46 (YIGW…TATS), 118-133 (HFFL…EWEL), and 142-156 (WIAV…AATA). A chlorophyll a-binding site is contributed by His-118. Pheophytin a is bound at residue Tyr-126. Residues Asp-170 and Glu-189 each coordinate [CaMn4O5] cluster. A helical membrane pass occupies residues 197-218 (FHMLGVAGVFGGSLFSAMHGSL). Residue His-198 participates in chlorophyll a binding. A quinone contacts are provided by residues His-215 and 264 to 265 (SF). His-215 contacts Fe cation. His-272 serves as a coordination point for Fe cation. Residues 274 to 288 (FLAAWPVIGIWFTAL) form a helical membrane-spanning segment. [CaMn4O5] cluster is bound by residues His-332, Glu-333, Asp-342, and Ala-344.

The protein belongs to the reaction center PufL/M/PsbA/D family. PSII is composed of 1 copy each of membrane proteins PsbA, PsbB, PsbC, PsbD, PsbE, PsbF, PsbH, PsbI, PsbJ, PsbK, PsbL, PsbM, PsbT, PsbX, PsbY, PsbZ, Psb30/Ycf12, at least 3 peripheral proteins of the oxygen-evolving complex and a large number of cofactors. It forms dimeric complexes. The D1/D2 heterodimer binds P680, chlorophylls that are the primary electron donor of PSII, and subsequent electron acceptors. It shares a non-heme iron and each subunit binds pheophytin, quinone, additional chlorophylls, carotenoids and lipids. D1 provides most of the ligands for the Mn4-Ca-O5 cluster of the oxygen-evolving complex (OEC). There is also a Cl(-1) ion associated with D1 and D2, which is required for oxygen evolution. The PSII complex binds additional chlorophylls, carotenoids and specific lipids. serves as cofactor. Post-translationally, tyr-161 forms a radical intermediate that is referred to as redox-active TyrZ, YZ or Y-Z.

It is found in the plastid. The protein localises to the chloroplast thylakoid membrane. The enzyme catalyses 2 a plastoquinone + 4 hnu + 2 H2O = 2 a plastoquinol + O2. Its function is as follows. Photosystem II (PSII) is a light-driven water:plastoquinone oxidoreductase that uses light energy to abstract electrons from H(2)O, generating O(2) and a proton gradient subsequently used for ATP formation. It consists of a core antenna complex that captures photons, and an electron transfer chain that converts photonic excitation into a charge separation. The D1/D2 (PsbA/PsbD) reaction center heterodimer binds P680, the primary electron donor of PSII as well as several subsequent electron acceptors. In Pleurastrum terricola (Filamentous green alga), this protein is Photosystem II protein D1.